Here is a 466-residue protein sequence, read N- to C-terminus: MSTRSVSSSSYRRMFGGPGTASRPSSTRSYVTTSTRTYSLGSALRPTTSRTLYTSSPGGVYATRSSAVRLRSGVPGVRLLQDSVDFSLADAINTEFKNTRTNEKVELQELNDRFANYIDKVRFLEQQNKILLAELEQLKGQGKSRLGDLYEEEMRELRRQVDQLTNDKARVEVERDNLAEDIMRLREKLQEEMLQREEAESTLQSFRQDVDNASLARLDLERKVESLQEEIAFLKKLHDEEIQELQAQIQEQHVQIDMDVSKPDLTAALRDVRQQYESVAAKNLQEAEEWYKSKFADLSEAANRNNDALRQAKQESNEYRRQVQTLTCEVDALKGTNESLERQMREMEENFSVEAANYQDTIGRLQDEIQNMKEEMARHLREYQDLLNVKMALDIEIATYRKLLEGEESRISLPLPNFSSLNLRETNLDSLPLVDTHSKRTLLIKTVETRDGQVINETSQHHDDLE.

Residues 1–13 (MSTRSVSSSSYRR) are compositionally biased toward low complexity. Residues 1-31 (MSTRSVSSSSYRRMFGGPGTASRPSSTRSYV) form a disordered region. Ser-2 carries the N-acetylserine modification. Residues 2-95 (STRSVSSSSY…FSLADAINTE (94 aa)) are head. Ser-5 carries the post-translational modification Phosphoserine. Ser-7 carries the phosphoserine; by PKA and PKC; alternate modification. Ser-7 carries an O-linked (GlcNAc) serine; alternate glycan. Residue Ser-8 is modified to Phosphoserine. Phosphoserine; by PKC occurs at positions 9 and 10. At Thr-20 the chain carries Phosphothreonine. Phosphoserine; by PKA and PKC is present on Ser-25. Ser-26 is subject to Phosphoserine; by PKC. A glycan (O-linked (GlcNAc) threonine) is linked at Thr-33. The O-linked (GlcNAc) serine; alternate glycan is linked to Ser-34. A Phosphoserine; by PKC; alternate modification is found at Ser-34. Ser-39 bears the Phosphoserine; by CaMK2, PKA, PKC and ROCK2 mark. Ser-42 carries the post-translational modification Phosphoserine; by PKC. Ser-49 bears the Phosphoserine mark. Tyr-53 is modified (phosphotyrosine). Ser-55 bears the Phosphoserine mark. Ser-56 is subject to Phosphoserine; by CDK5 and CDK1. The residue at position 61 (Tyr-61) is a Phosphotyrosine. A Phosphoserine; by PKA and PKC modification is found at Ser-66. Phosphoserine; by AURKB and ROCK2 is present on Ser-72. The residue at position 83 (Ser-83) is a Phosphoserine; by CaMK2. Residue Ser-87 is modified to Phosphoserine. The interval 96–131 (FKNTRTNEKVELQELNDRFANYIDKVRFLEQQNKIL) is coil 1A. The stretch at 96 to 131 (FKNTRTNEKVELQELNDRFANYIDKVRFLEQQNKIL) forms a coiled coil. An IF rod domain is found at 103 to 411 (EKVELQELND…KLLEGEESRI (309 aa)). Lys-104 is covalently cross-linked (Glycyl lysine isopeptide (Lys-Gly) (interchain with G-Cter in SUMO2)). Residue Tyr-117 is modified to Phosphotyrosine. N6-acetyllysine; alternate is present on residues Lys-120, Lys-129, and Lys-139. N6-succinyllysine; alternate is present on residues Lys-120 and Lys-129. Residues Lys-120, Lys-129, and Lys-139 each participate in a glycyl lysine isopeptide (Lys-Gly) (interchain with G-Cter in SUMO2); alternate cross-link. Positions 132 to 153 (LAELEQLKGQGKSRLGDLYEEE) are linker 1. Phosphoserine is present on Ser-144. Positions 154–245 (MRELRRQVDQ…KLHDEEIQEL (92 aa)) form a coiled coil. The coil 1B stretch occupies residues 154–245 (MRELRRQVDQ…KLHDEEIQEL (92 aa)). N6-acetyllysine is present on Lys-168. N6-acetyllysine; alternate is present on Lys-188. Lys-188 carries the post-translational modification N6-succinyllysine; alternate. Ser-214 carries the phosphoserine modification. Lys-223 carries the N6-acetyllysine; alternate modification. Residue Lys-223 forms a Glycyl lysine isopeptide (Lys-Gly) (interchain with G-Cter in SUMO2); alternate linkage. At Ser-226 the chain carries Phosphoserine. An N6-acetyllysine modification is found at Lys-235. The linker 12 stretch occupies residues 246–268 (QAQIQEQHVQIDMDVSKPDLTAA). Lys-262 participates in a covalent cross-link: Glycyl lysine isopeptide (Lys-Gly) (interchain with G-Cter in SUMO2). The interval 269-407 (LRDVRQQYES…ATYRKLLEGE (139 aa)) is coil 2. N6-acetyllysine; alternate is present on Lys-294. Lys-294 carries the N6-succinyllysine; alternate modification. Residue Lys-294 forms a Glycyl lysine isopeptide (Lys-Gly) (interchain with G-Cter in SUMO2); alternate linkage. The residue at position 299 (Ser-299) is a Phosphoserine. Positions 303-407 (NRNNDALRQA…ATYRKLLEGE (105 aa)) form a coiled coil. Lys-313 is covalently cross-linked (Glycyl lysine isopeptide (Lys-Gly) (interchain with G-Cter in SUMO2)). Positions 326 to 329 (LTCE) match the [IL]-x-C-x-x-[DE] motif motif. Residue Lys-373 is modified to N6-acetyllysine; alternate. Lys-373 is covalently cross-linked (Glycyl lysine isopeptide (Lys-Gly) (interchain with G-Cter in SUMO2); alternate). The segment at 408–466 (ESRISLPLPNFSSLNLRETNLDSLPLVDTHSKRTLLIKTVETRDGQVINETSQHHDDLE) is tail. Ser-409, Ser-412, Ser-419, and Ser-420 each carry phosphoserine. A Phosphothreonine modification is found at Thr-426. Ser-430 is subject to Phosphoserine. Thr-436 carries the phosphothreonine modification. A Phosphoserine modification is found at Ser-438. Lys-439 participates in a covalent cross-link: Glycyl lysine isopeptide (Lys-Gly) (interchain with G-Cter in SUMO2). The residue at position 445 (Lys-445) is an N6-acetyllysine; alternate. Lys-445 bears the N6-succinyllysine; alternate mark. Lys-445 is covalently cross-linked (Glycyl lysine isopeptide (Lys-Gly) (interchain with G-Cter in SUMO2); alternate). Lys-445 is covalently cross-linked (Glycyl lysine isopeptide (Lys-Gly) (interchain with G-Cter in SUMO1); alternate). Phosphothreonine is present on residues Thr-446 and Thr-458. A Phosphoserine modification is found at Ser-459.

Belongs to the intermediate filament family. Homomer assembled from elementary dimers. Identified in complexes that contain VIM, EZR, AHNAK, BFSP1, BFSP2, ANK2, PLEC, PRX and spectrin. Interacts with BCAS3. Interacts with LGSN. Interacts with SYNM. Interacts (via rod region) with PLEC (via CH 1 domain). Interacts with STK33. Interacts with LARP6. Interacts with RAB8B. Interacts with TOR1A; the interaction associates TOR1A with the cytoskeleton. Interacts with TOR1AIP1. Interacts with TOR1AIP1. Interacts with DIAPH1. Interacts with EPPK1; interaction is dependent of higher-order structure of intermediate filament. Interacts with the non-receptor tyrosine kinase SRMS; the interaction leads to phosphorylation of VIM. Interacts with NOD2. Interacts (via head region) with CORO1C. Interacts with HDGF. Interacts with PRKCE (via phorbol-ester/DAG-type 2 domain). Interacts with BFSP2. Interacts with PPL. Interacts with PKP1 and PKP2. Interacts with SCRIB (via PDZ domains); the interaction protects SCRIB from proteasomal degradation and facilitates SCRIB localization to intermediate filaments, the interaction is reduced by cell contact inhibition. One of the most prominent phosphoproteins in various cells of mesenchymal origin. Phosphorylation is enhanced during cell division, at which time vimentin filaments are significantly reorganized. Phosphorylation by PKN1 inhibits the formation of filaments. Filament disassembly during mitosis is promoted by phosphorylation at Ser-55 as well as by nestin. Phosphorylated at Ser-56 by CDK5 during neutrophil secretion in the cytoplasm. Phosphorylated by STK33. Phosphorylated on tyrosine residues by SRMS. Post-translationally, S-nitrosylation is induced by interferon-gamma and oxidatively-modified low-densitity lipoprotein (LDL(ox)) possibly implicating the iNOS-S100A8/9 transnitrosylase complex.

It localises to the cytoplasm. The protein localises to the cytoskeleton. Its subcellular location is the nucleus matrix. It is found in the cell membrane. Functionally, vimentins are class-III intermediate filaments found in various non-epithelial cells, especially mesenchymal cells. Vimentin is attached to the nucleus, endoplasmic reticulum, and mitochondria, either laterally or terminally. Plays a role in cell directional movement, orientation, cell sheet organization and Golgi complex polarization at the cell migration front. Protects SCRIB from proteasomal degradation and facilitates its localization to intermediate filaments in a cell contact-mediated manner. In terms of biological role, involved with LARP6 in the stabilization of type I collagen mRNAs for CO1A1 and CO1A2. The protein is Vimentin (VIM) of Bos taurus (Bovine).